The sequence spans 329 residues: Methionyl-tRNA formyltransferase (329 aa).

(6S)-5,6,7,8-tetrahydrofolate is bound at residue 118–121; the sequence is SLLP.

The protein belongs to the Fmt family.

The catalysed reaction is L-methionyl-tRNA(fMet) + (6R)-10-formyltetrahydrofolate = N-formyl-L-methionyl-tRNA(fMet) + (6S)-5,6,7,8-tetrahydrofolate + H(+). Functionally, attaches a formyl group to the free amino group of methionyl-tRNA(fMet). The formyl group appears to play a dual role in the initiator identity of N-formylmethionyl-tRNA by promoting its recognition by IF2 and preventing the misappropriation of this tRNA by the elongation apparatus. This is Methionyl-tRNA formyltransferase from Corynebacterium urealyticum (strain ATCC 43042 / DSM 7109).